Here is a 244-residue protein sequence, read N- to C-terminus: Phosphoadenosine 5'-phosphosulfate reductase (244 aa).

Cysteine 239 acts as the Nucleophile; cysteine thiosulfonate intermediate in catalysis.

This sequence belongs to the PAPS reductase family. CysH subfamily.

The protein localises to the cytoplasm. The catalysed reaction is [thioredoxin]-disulfide + sulfite + adenosine 3',5'-bisphosphate + 2 H(+) = [thioredoxin]-dithiol + 3'-phosphoadenylyl sulfate. Its pathway is sulfur metabolism; hydrogen sulfide biosynthesis; sulfite from sulfate: step 3/3. Catalyzes the formation of sulfite from phosphoadenosine 5'-phosphosulfate (PAPS) using thioredoxin as an electron donor. This is Phosphoadenosine 5'-phosphosulfate reductase from Salmonella arizonae (strain ATCC BAA-731 / CDC346-86 / RSK2980).